A 234-amino-acid polypeptide reads, in one-letter code: Matrix protein 1 (234 aa).

The tract at residues 1–103 (MHERSKPKTT…QELAEGGIRM (103 aa)) is disordered. The span at 76–96 (CDERSTIGRHGNADERPHQEL) shows a compositional bias: basic and acidic residues. Positions 183-234 (PEVSFKERMEAEKKKLKELDDKIYKLRRRLRKMEYKKMGINREIDKLEDSVQ) form a coiled coil.

Interacts with host HSC70.

It localises to the virion. The protein resides in the host cytoplasm. Its subcellular location is the host nucleus. Its function is as follows. May play a role in virus replication, from virus entry and uncoating to assembly and budding of the virus particle. Interaction of viral NEP with M1-Hsc70 is thought to promote nuclear export of the viral encapsidated genomes. This is Matrix protein 1 from Infectious salmon anemia virus (isolate Atlantic salmon/Norway/810/9/99) (ISAV).